The sequence spans 111 residues: Anti-adapter protein IraM (111 aa).

Belongs to the IraM/RssC family.

The protein localises to the cytoplasm. Its function is as follows. Inhibits RpoS proteolysis by regulating RssB activity, thereby increasing the stability of the sigma stress factor RpoS during magnesium starvation. The polypeptide is Anti-adapter protein IraM (Escherichia coli O127:H6 (strain E2348/69 / EPEC)).